The chain runs to 142 residues: MKTFSAKPQSVTRDWYVVDATDKTLGRLATEIARRLRGKHKPEYTPHVDTGDYIVVVNAEKVRVTGNKAQAKNYYRHTGYPGGLRSMSFEKLIDHAPERVIESAVKGMLPKGPLGRAMYSKLKVYAGAEHPHAAQQPLELNL.

The protein belongs to the universal ribosomal protein uL13 family. As to quaternary structure, part of the 50S ribosomal subunit.

This protein is one of the early assembly proteins of the 50S ribosomal subunit, although it is not seen to bind rRNA by itself. It is important during the early stages of 50S assembly. This chain is Large ribosomal subunit protein uL13, found in Chromohalobacter salexigens (strain ATCC BAA-138 / DSM 3043 / CIP 106854 / NCIMB 13768 / 1H11).